We begin with the raw amino-acid sequence, 310 residues long: Protein CUP-SHAPED COTYLEDON 1 (310 aa).

The NAC domain occupies 20 to 172 (MPPGFRFHPT…EWVLCKVCLK (153 aa)). A DNA-binding region spans residues 119–178 (LGMKKTLVFYKGRAPKGEKSCWVMHEYRLDGKFSYHYISSSAKDEWVLCKVCLKSGVVSR). Involved in transactivation activity regions lie at residues 179-210 (ETNL…NTFA) and 306-310 (WPFTL).

As to expression, expressed in inflorescence stems, rosette leaves, aerial parts of seedlings, flowers, floral buds and roots.

The protein resides in the nucleus. In terms of biological role, transcription activator of STM and KNAT6. Involved in molecular mechanisms regulating shoot apical meristem (SAM) formation during embryogenesis and organ separation. Required for the fusion of septa of gynoecia along the length of the ovaries. Activates the shoot formation in callus in a STM-dependent manner. Seems to act as an inhibitor of cell division. The sequence is that of Protein CUP-SHAPED COTYLEDON 1 (NAC054) from Arabidopsis thaliana (Mouse-ear cress).